The chain runs to 426 residues: Fc receptor-like B (426 aa).

An N-terminal signal peptide occupies residues 1–17 (MWPLTALLLLVPSSGQA). Ig-like C2-type domains are found at residues 23–101 (PILS…LSVS) and 103–189 (DWLI…VAVT). Cystine bridges form between Cys44/Cys85 and Cys124/Cys168. Residue Asn152 is glycosylated (N-linked (GlcNAc...) asparagine). A disordered region spans residues 400–426 (ELRGTPETPTSHFAVSPGTPETTPVES). Over residues 406–426 (ETPTSHFAVSPGTPETTPVES) the composition is skewed to polar residues.

As to expression, expressed at low levels. Expressed in B-lymphocytes. Detected in tonsil, lung, kidney, spleen and placenta. Expressed by a small subset of germinal center B-cells in tonsils and by melanocytes (at protein level).

It localises to the cytoplasm. The protein localises to the endoplasmic reticulum. The polypeptide is Fc receptor-like B (FCRLB) (Homo sapiens (Human)).